We begin with the raw amino-acid sequence, 310 residues long: Protein OS-9 homolog (310 aa).

Residues 1 to 40 (MFSSSMFPHLILPAIGSSKVRTMVLPFAFVGFFIFPICLA) form the signal peptide. 3 N-linked (GlcNAc...) asparagine glycosylation sites follow: asparagine 60, asparagine 97, and asparagine 104. The MRH domain maps to 129–255 (NVFLIENRGY…TIHVPGLCSL (127 aa)). A mannooligosaccharide derivative-binding residues include tryptophan 139 and glutamine 151. A glycan (N-linked (GlcNAc...) asparagine) is linked at asparagine 204. Disulfide bonds link cysteine 208–cysteine 241 and cysteine 223–cysteine 253. A mannooligosaccharide derivative-binding residues include aspartate 209, arginine 215, glutamate 237, and tyrosine 243. Basic and acidic residues-rich tracts occupy residues 282-292 (VDHKDSQHVVD) and 301-310 (EVKEVETQSS). The disordered stretch occupies residues 282 to 310 (VDHKDSQHVVDEVAQTSPPEVKEVETQSS).

It belongs to the OS-9 family. In terms of assembly, interacts with missfolded ER lumenal proteins.

It localises to the endoplasmic reticulum membrane. Lectin involved in the quality control of the secretory pathway. As a member of the endoplasmic reticulum-associated degradation lumenal (ERAD-L) surveillance system, targets misfolded endoplasmic reticulum lumenal glycoproteins for degradation. The sequence is that of Protein OS-9 homolog (yos9) from Schizosaccharomyces pombe (strain 972 / ATCC 24843) (Fission yeast).